Here is an 89-residue protein sequence, read N- to C-terminus: Large ribosomal subunit protein eL34 (89 aa).

Positions 1–32 (MPAPRFKSGSFKKISKRGPGNKTLTHHRRSKV) are disordered.

This sequence belongs to the eukaryotic ribosomal protein eL34 family.

In Methanococcus aeolicus (strain ATCC BAA-1280 / DSM 17508 / OCM 812 / Nankai-3), this protein is Large ribosomal subunit protein eL34.